We begin with the raw amino-acid sequence, 281 residues long: Very-long-chain (3R)-3-hydroxyacyl-CoA dehydratase 1 (281 aa).

Residues 1–68 (MGKGDWRQGR…RRLGLLATAW (68 aa)) are Cytoplasmic-facing. Residues 69–88 (LTFYNIAMTAGWLVLAIAMV) form a helical membrane-spanning segment. Topologically, residues 89-107 (RFYMEKGTHRGLYKSIQKT) are lumenal. Residues 108-124 (LKFFQTFALLEVVHCLI) traverse the membrane as a helical segment. Topologically, residues 125-134 (GIVPTSVLVT) are cytoplasmic. A helical membrane pass occupies residues 135–152 (GVQVSSRIFMVWLITHSI). The Lumenal segment spans residues 153–158 (KPIQNE). The helical transmembrane segment at 159-173 (ESVVLFLVSWTVTEI) threads the bilayer. Topologically, residues 174–196 (TRYSFYTFSLLDHLPHFIKWARY) are cytoplasmic. The helical transmembrane segment at 197 to 214 (NLFIILYPVGVAGELLTI) threads the bilayer. Catalysis depends on residues Y203 and E210. Over 215–244 (YAALPYVKKSGMFSVRLPNKYNVSFDYYYF) the chain is Lumenal. Residue N236 is glycosylated (N-linked (GlcNAc...) asparagine). A helical transmembrane segment spans residues 245–262 (LLITMASYIPLFPQLYFH). The Cytoplasmic portion of the chain corresponds to 263-281 (MLRQRRKVLHGEVIAEKDD).

Belongs to the very long-chain fatty acids dehydratase HACD family. As to quaternary structure, may interact with enzymes of the ELO family (including ELOVL1); with those enzymes that mediate condensation, the first of the four steps of the reaction cycle responsible for fatty acids elongation, may be part of a larger fatty acids elongase complex. Interacts with TECR. Post-translationally, N-glycosylated. As to expression, expressed at high levels in heart, skeletal muscle and testis, weak expression in kidney and liver.

The protein localises to the endoplasmic reticulum membrane. The enzyme catalyses a very-long-chain (3R)-3-hydroxyacyl-CoA = a very-long-chain (2E)-enoyl-CoA + H2O. It carries out the reaction (3R)-hydroxyhexadecanoyl-CoA = (2E)-hexadecenoyl-CoA + H2O. The catalysed reaction is (3R)-hydroxyoctadecanoyl-CoA = (2E)-octadecenoyl-CoA + H2O. It catalyses the reaction (3R)-hydroxyeicosanoyl-CoA = (2E)-eicosenoyl-CoA + H2O. The enzyme catalyses (3R)-hydroxydocosanoyl-CoA = (2E)-docosenoyl-CoA + H2O. It carries out the reaction (3R)-hydroxytetracosanoyl-CoA = (2E)-tetracosenoyl-CoA + H2O. The catalysed reaction is (3R)-hydroxyhexacosanoyl-CoA = (2E)-hexacosenoyl-CoA + H2O. The protein operates within lipid metabolism; fatty acid biosynthesis. The polypeptide is Very-long-chain (3R)-3-hydroxyacyl-CoA dehydratase 1 (Mus musculus (Mouse)).